The sequence spans 121 residues: MPPKSGKGQKKAGKAKGAPRSDKKRRRKRKESYGIYIYKVMKQVHPDTGISSRAMSIMNSFVNDIFERIAAEASRLAHYNKKSTITSREVQTAVRLLLPGELAKHAVSEGTKAVTKYTTSK.

Residues 1–30 (MPPKSGKGQKKAGKAKGAPRSDKKRRRKRK) are disordered. Pro-2 carries the post-translational modification N,N-dimethylproline. Residue Ser-108 is glycosylated (O-linked (GlcNAc) serine). Lys-116 is covalently cross-linked (Glycyl lysine isopeptide (Lys-Gly) (interchain with G-Cter in ubiquitin)).

Belongs to the histone H2B family. As to quaternary structure, the nucleosome is a histone octamer containing two molecules each of H2A, H2B, H3 and H4 assembled in one H3-H4 heterotetramer and two H2A-H2B heterodimers. The octamer wraps approximately 147 bp of DNA. Monoubiquitination of Lys-116 gives a specific tag for epigenetic transcriptional activation and is also prerequisite for histone H3 'Lys-4' and 'Lys-79' methylation. In terms of processing, glcNAcylation at Ser-108 promotes monoubiquitination of Lys-116. It fluctuates in response to extracellular glucose, and associates with transcribed genes.

Its subcellular location is the nucleus. The protein resides in the chromosome. Functionally, core component of nucleosome. Nucleosomes wrap and compact DNA into chromatin, limiting DNA accessibility to the cellular machineries which require DNA as a template. Histones thereby play a central role in transcription regulation, DNA repair, DNA replication and chromosomal stability. DNA accessibility is regulated via a complex set of post-translational modifications of histones, also called histone code, and nucleosome remodeling. The polypeptide is Histone H2B, sperm (Marthasterias glacialis (Spiny starfish)).